The primary structure comprises 131 residues: Holin (131 aa).

A run of 2 helical transmembrane segments spans residues 9 to 29 (IYLLGTAAPALLGIVLIWGGL) and 40 to 60 (IIAGVVSILVSGAPAVAAGTV). Residues 74-104 (VDQVTKGVEQVLAARQSAEAEVAKVKQALET) are a coiled coil.

It belongs to the Mycobacterium phage D29 holin family. As to quaternary structure, homomultimer. Self-associates to form a pore.

It localises to the host cell inner membrane. Accumulates harmlessly in the cytoplasmic membrane until it reaches a critical concentration that triggers the formation of micron-scale pores (holes) causing host cell membrane disruption and endolysin escape into the periplasmic space. Determines the precise timing of host cell lysis. Participates with the endolysin protein in the sequential events which lead to the programmed host cell lysis releasing the mature viral particles from the host cell. In Mycobacterium (Mycobacteriophage L5), this protein is Holin (11).